A 77-amino-acid chain; its full sequence is Conotoxin LiC42 (77 aa).

Positions 1–22 are cleaved as a signal peptide; the sequence is MKLTCVLIIAVLFLTASQLITA. A propeptide spanning residues 23 to 47 is cleaved from the precursor; the sequence is DYSRDKQEYGAERLRDAMGKFKGSR. 3 disulfides stabilise this stretch: C49–C62, C56–C67, and C61–C76.

Belongs to the conotoxin O1 superfamily. Expressed by the venom duct.

It localises to the secreted. The protein is Conotoxin LiC42 of Conus lividus (Livid cone).